The sequence spans 162 residues: MADSSFDIVSKVERQEVDNALNQAAKEISQRYDFKGTGASISWSGEKILMEANGEERVKAVLDIFQSKLIKRGISLKSLDAGEPQLSGKEYKIFATIEEGISQENAKKVAKIIRDEGPKGVKAQVQGDELRVSSKSRDDLQAVQALLKGQDFDFAVQFVNYR.

The protein belongs to the YajQ family.

In terms of biological role, nucleotide-binding protein. This Streptomyces griseus subsp. griseus (strain JCM 4626 / CBS 651.72 / NBRC 13350 / KCC S-0626 / ISP 5235) protein is Nucleotide-binding protein SGR_2909.